The sequence spans 1132 residues: Error-prone DNA polymerase (1132 aa).

It belongs to the DNA polymerase type-C family. DnaE2 subfamily.

It is found in the cytoplasm. The enzyme catalyses DNA(n) + a 2'-deoxyribonucleoside 5'-triphosphate = DNA(n+1) + diphosphate. Functionally, DNA polymerase involved in damage-induced mutagenesis and translesion synthesis (TLS). It is not the major replicative DNA polymerase. This chain is Error-prone DNA polymerase, found in Anaeromyxobacter dehalogenans (strain 2CP-C).